Reading from the N-terminus, the 342-residue chain is 3-isopropylmalate dehydrogenase (342 aa).

4 residues coordinate substrate: R92, R102, R126, and D216. Residues D216, D240, and D244 each coordinate Mg(2+). 276–288 (GSAPDIAGKGIAD) contributes to the NAD(+) binding site.

The protein belongs to the isocitrate and isopropylmalate dehydrogenases family. LeuB type 2 subfamily. In terms of assembly, homodimer. The cofactor is Mg(2+). Mn(2+) serves as cofactor.

It localises to the cytoplasm. The catalysed reaction is (2R,3S)-3-isopropylmalate + NAD(+) = 4-methyl-2-oxopentanoate + CO2 + NADH. Its pathway is amino-acid biosynthesis; L-leucine biosynthesis; L-leucine from 3-methyl-2-oxobutanoate: step 3/4. Functionally, catalyzes the oxidation of 3-carboxy-2-hydroxy-4-methylpentanoate (3-isopropylmalate) to 3-carboxy-4-methyl-2-oxopentanoate. The product decarboxylates to 4-methyl-2 oxopentanoate. The sequence is that of 3-isopropylmalate dehydrogenase from Corynebacterium kroppenstedtii (strain DSM 44385 / JCM 11950 / CIP 105744 / CCUG 35717).